Reading from the N-terminus, the 122-residue chain is Prefoldin subunit 1 (122 aa).

The residue at position 2 (A2) is an N-acetylalanine.

It belongs to the prefoldin subunit beta family. As to quaternary structure, heterohexamer of two PFD-alpha type and four PFD-beta type subunits.

Functionally, binds specifically to cytosolic chaperonin (c-CPN) and transfers target proteins to it. Binds to nascent polypeptide chain and promotes folding in an environment in which there are many competing pathways for nonnative proteins. This is Prefoldin subunit 1 (PFDN1) from Pongo abelii (Sumatran orangutan).